The primary structure comprises 646 residues: Wee1-like protein kinase (646 aa).

The disordered stretch occupies residues 1–181; that stretch reads MSFLSRQQPP…GTPPHKTFRK (181 aa). The segment covering 32–43 has biased composition (acidic residues); it reads DCEEEEEEEEEE. Serine 53 bears the Phosphoserine; by PLK1 mark. Serine 78 and serine 85 each carry phosphoserine. Positions 94–103 are enriched in low complexity; it reads LLPGACPGAD. Phosphoserine; by CDK1 is present on serine 123. Serine 127, serine 137, serine 139, serine 150, and serine 165 each carry phosphoserine. The segment covering 158–170 has biased composition (basic and acidic residues); sequence RAGEGRRSPRPDH. 3 positions are modified to phosphothreonine: threonine 187, threonine 190, and threonine 239. Phosphoserine occurs at positions 270, 307, and 312. Residues 299–569 form the Protein kinase domain; sequence FHELEKIGSG…AMALVKHSVL (271 aa). Residues 305–313 and lysine 328 contribute to the ATP site; that span reads IGSGEFGSV. A Mg(2+)-binding site is contributed by asparagine 342. The active-site Proton acceptor is aspartate 426. Mg(2+) contacts are provided by asparagine 431, aspartate 463, and glycine 465. Serine 642 carries the phosphoserine; by BRSK1 and BRSK2 modification.

This sequence belongs to the protein kinase superfamily. Ser/Thr protein kinase family. WEE1 subfamily. Mg(2+) is required as a cofactor. Post-translationally, phosphorylated during M and G1 phases. Also autophosphorylated. Phosphorylation at Ser-642 by BRSK1 and BRSK2 in post-mitotic neurons, leads to down-regulate WEE1 activity in polarized neurons. Phosphorylated at Ser-53 and Ser-123 by PLK1 and CDK1, respectively, generating an signal for degradation that can be recognized by the SCF(BTRC) complex, leading to its ubiquitination and degradation at the onset of G2/M phase. In terms of processing, dephosphorylated at Thr-239 by CTDP1. Dephosphorylated at Ser-53 and Ser-123 by the serine/threonine-protein phosphatase 2A preventing its ubiquitin-mediated degradation. Ubiquitinated and degraded at the onset of G2/M phase.

It is found in the nucleus. It catalyses the reaction L-tyrosyl-[protein] + ATP = O-phospho-L-tyrosyl-[protein] + ADP + H(+). Synthesis is increased during S and G2 phases, presumably by an increase in transcription; activity is decreased by phosphorylation during M phase. Protein levels fall in M phase as a result of decreased synthesis combined with degradation. Activity seems to be negatively regulated by phosphorylation upon entry into mitosis, although N-terminal phosphorylation might also regulate the protein stability via protection from proteolysis or might regulate the subcellular location. In terms of biological role, acts as a negative regulator of entry into mitosis (G2 to M transition) by protecting the nucleus from cytoplasmically activated cyclin B1-complexed CDK1 before the onset of mitosis by mediating phosphorylation of CDK1 on 'Tyr-15'. Specifically phosphorylates and inactivates cyclin B1-complexed CDK1 reaching a maximum during G2 phase and a minimum as cells enter M phase. Phosphorylation of cyclin B1-CDK1 occurs exclusively on 'Tyr-15' and phosphorylation of monomeric CDK1 does not occur. Its activity increases during S and G2 phases and decreases at M phase when it is hyperphosphorylated. A correlated decrease in protein level occurs at M/G1 phase, probably due to its degradation. The chain is Wee1-like protein kinase from Homo sapiens (Human).